Reading from the N-terminus, the 105-residue chain is Iron-sulfur cluster assembly protein CyaY (105 aa).

It belongs to the frataxin family.

Its function is as follows. Involved in iron-sulfur (Fe-S) cluster assembly. May act as a regulator of Fe-S biogenesis. The chain is Iron-sulfur cluster assembly protein CyaY from Paraburkholderia phytofirmans (strain DSM 17436 / LMG 22146 / PsJN) (Burkholderia phytofirmans).